A 175-amino-acid chain; its full sequence is Disulfide bond formation protein B (175 aa).

Over 1–13 the chain is Cytoplasmic; it reads MTAFTRFAHSRAS. A helical membrane pass occupies residues 14-30; it reads WFILTGSAIALEAAALY. At 31-48 the chain is on the periplasmic side; the sequence is FQYVMKLDPCVMCIYQRL. Cys40 and Cys43 form a disulfide bridge. A helical membrane pass occupies residues 49–64; it reads AVFGILASGLIGMTAP. The Cytoplasmic segment spans residues 65–71; that stretch reads KFLIVRI. A helical transmembrane segment spans residues 72–89; that stretch reads LGAIGWAVSATWGLKLAL. Residues 90 to 144 lie on the Periplasmic side of the membrane; sequence ALVDMQNNPSPFSTCSFLPEFPAWMPLHEWFPSVMLPTGMCTDVPWQFMGVTMAE. A disulfide bond links Cys104 and Cys130. The helical transmembrane segment at 145-163 threads the bilayer; sequence WMVVAFSGYLVALLLFIVP. At 164-175 the chain is on the cytoplasmic side; the sequence is ILSGSNKPSLYK.

This sequence belongs to the DsbB family.

The protein resides in the cell inner membrane. In terms of biological role, required for disulfide bond formation in some periplasmic proteins. Acts by oxidizing the DsbA protein. The protein is Disulfide bond formation protein B of Shewanella sp. (strain ANA-3).